The primary structure comprises 209 residues: 3-dehydroquinate dehydratase (209 aa).

Residues Ser6, 25–27, and Arg55 each bind 3-dehydroquinate; that span reads ELR. The active-site Proton donor/acceptor is the His109. The active-site Schiff-base intermediate with substrate is the Lys134. Positions 172 and 195 each coordinate 3-dehydroquinate.

Belongs to the type-I 3-dehydroquinase family. Homodimer.

The enzyme catalyses 3-dehydroquinate = 3-dehydroshikimate + H2O. The protein operates within metabolic intermediate biosynthesis; chorismate biosynthesis; chorismate from D-erythrose 4-phosphate and phosphoenolpyruvate: step 3/7. Involved in the third step of the chorismate pathway, which leads to the biosynthesis of aromatic amino acids. Catalyzes the cis-dehydration of 3-dehydroquinate (DHQ) and introduces the first double bond of the aromatic ring to yield 3-dehydroshikimate. This chain is 3-dehydroquinate dehydratase, found in Methanoregula boonei (strain DSM 21154 / JCM 14090 / 6A8).